We begin with the raw amino-acid sequence, 156 residues long: Cytochrome c-type biogenesis protein CcmE 1 (156 aa).

At 1 to 8 (MNATRKQR) the chain is on the cytoplasmic side. A helical; Signal-anchor for type II membrane protein membrane pass occupies residues 9–29 (LWLVIGVLTAAALAVTLIALA). Residues 30-156 (LQRNMSYLFT…AAAAPLSGVR (127 aa)) lie on the Periplasmic side of the membrane. H123 and Y127 together coordinate heme.

It belongs to the CcmE/CycJ family.

It is found in the cell inner membrane. In terms of biological role, heme chaperone required for the biogenesis of c-type cytochromes. Transiently binds heme delivered by CcmC and transfers the heme to apo-cytochromes in a process facilitated by CcmF and CcmH. This Xanthomonas campestris pv. campestris (strain 8004) protein is Cytochrome c-type biogenesis protein CcmE 1.